The following is a 521-amino-acid chain: Cytochrome P450 monooxygenase gloO (521 aa).

An N-terminal signal peptide occupies residues 1 to 26; sequence MIAALFTTNLQLGAVGVFIFALLAFA. Cys464 contacts heme.

The protein belongs to the cytochrome P450 family. Heme serves as cofactor.

Its pathway is mycotoxin biosynthesis. Cytochrome P450 monooxygenase; part of the gene cluster that mediates the biosynthesis of pneumocandins, lipohexapeptides of the echinocandin family that prevent fungal cell wall formation by non-competitive inhibition of beta-1,3-glucan synthase. The 10,12-dimethylmyristoyl side chain is synthesized by the reducing polyketide synthase gloL/GLPKS4. The thioesterase gloN/GLHYD exclusively interacts with gloL/GLPKS4 to maintain turnover of the polyketide side chain. The 10R,12S-dimethylmyristic acid is then transferred to the first thiolation domain of the nonribosomal peptide synthetase gloA/GLNRPS4 by the acyl-AMP ligase gloD/GLligase, followed by its acylation to L-ornithine to trigger elongation of the cyclic hexapeptide. L-ornithine, 4R-hydroxyl-L-proline (generated from L-proline by the dioxygenase gloF/GLOXY2), 3S-hydroxyl-L-homotyrosine (generated by gloG/GLHtyB, gloH/GLHtyA, gloI/GLHtyC, gloJ/GLHtyD and hydroxylated at C-3 by the dioxygenase gloM/GLOXY1), 3R-hydroxyl-L-glutamine (generated from L-glutamine probably by the dioxygenase gloE/GLOXY3) and 3S-hydroxyl-L-proline (generated from L-proline by the dioxygenase gloF/GLOXY2 to yield pneumocandin B0), or 3S-hydroxyl-4S-methyl-L-proline (generated from L-leucine by the dioxygenase gloC/GLOXY4 to yield pneumocandin A0) are sequentially added to the growing chain. The last C domain of gloA/GLNRPS4 is proposed to be responsible for cyclization by condensation to form the peptide bond between L-ornithine and 3S-hydroxyl-4S-methyl-L-proline (for pneumocandin A0) or 3S-hydroxyl-L-proline (for pneumocandin B0). Finally, the subsequent C-4 hydroxylation of 3S-hydroxyl-L-homotyrosine and L-ornithine dihydroxylation at C-4 and C-5 are performed by the cytochrome P450 monooxygenases gloP/GLP450-1 and gloO/GLP450-2, respectively. The chain is Cytochrome P450 monooxygenase gloO from Glarea lozoyensis (strain ATCC 20868 / MF5171).